We begin with the raw amino-acid sequence, 86 residues long: Cell division topological specificity factor (86 aa).

This sequence belongs to the MinE family.

In terms of biological role, prevents the cell division inhibition by proteins MinC and MinD at internal division sites while permitting inhibition at polar sites. This ensures cell division at the proper site by restricting the formation of a division septum at the midpoint of the long axis of the cell. The chain is Cell division topological specificity factor from Rhizobium rhizogenes (strain K84 / ATCC BAA-868) (Agrobacterium radiobacter).